Consider the following 436-residue polypeptide: Retinoic acid receptor RXR (436 aa).

The tract at residues 1–108 is disordered; that stretch reads MDRSEGMDTL…GPSPSPGLPH (108 aa). Residues 1–116 are modulating; sequence MDRSEGMDTL…PHSSLHTKHI (116 aa). Residues 13-22 show a composition bias toward low complexity; it reads SMPSGMSMGM. Polar residues-rich tracts occupy residues 40–49 and 62–76; these read SSLTSPTSTH and MASS…QQMH. Over residues 85–98 the composition is skewed to low complexity; sequence SSMGSPPMLCLSPS. 2 NR C4-type zinc fingers span residues 117–137 and 153–172; these read CAIC…CEGC and CRDD…CQYC. Positions 117–182 form a DNA-binding region, nuclear receptor; the sequence is CAICGDRASG…RYMKCLSMGM (66 aa). A hinge region spans residues 183–206; that stretch reads KREAVQEERQRVKEKGDGEVESTS. Basic and acidic residues predominate over residues 189 to 200; sequence EERQRVKEKGDG. Residues 189–209 are disordered; the sequence is EERQRVKEKGDGEVESTSGAN. Residues 209 to 432 enclose the NR LBD domain; the sequence is NNDMPVEQIL…TFLMEMLENP (224 aa). The 9-cis-retinoate site is built by R290 and A301.

Belongs to the nuclear hormone receptor family. NR2 subfamily. In terms of assembly, homodimer (via ligand-binding domain). Heterodimer. Homotetramer consisting of 2 canonical homodimers. Within the tetramer, each monomer binds one molecule of 9C-RA and a NCOA1-derived peptide containing an L-X(2)-L-L motif.

Its subcellular location is the nucleus. In terms of biological role, ligand-dependent transcription factor probably involved in the retinoic acid response pathway. Binds 9-cis-retinoic acid (9C-RA) and, to a lesser extent, docosahexaenoic acid (DHA), phytanic acid, methoprene acid and oleic acid. Binds to double-stranded DNA sequences containing direct repeats (DR) with the consensus sequence 5'-[AG]GGTCA-3' and 1, 2, 3, 4 or 5 nucleotides in between (DR1, DR2, DR3. DR4 and DR5, respectively). Binding to DR1 is strongest. Transactivates gene expression when 9C-RA or DHA is bound. In Biomphalaria glabrata (Bloodfluke planorb), this protein is Retinoic acid receptor RXR.